A 242-amino-acid chain; its full sequence is Myogenic factor 6 (242 aa).

Residues 31–63 form a disordered region; it reads SPLYPGSDGTLSPCQDQMPPEAGSDSSGEEHVL. The bHLH domain occupies 93–144; the sequence is DRRKAATLRERRRLKKINEAFEALKRRTVANPNQRLPKVEILRSAISYIERL.

In terms of assembly, efficient DNA binding requires dimerization with another bHLH protein. Interacts with CSRP3. Skeletal muscle.

The protein resides in the nucleus. Functionally, involved in muscle differentiation (myogenic factor). Induces fibroblasts to differentiate into myoblasts. Probable sequence specific DNA-binding protein. The protein is Myogenic factor 6 (MYF6) of Homo sapiens (Human).